We begin with the raw amino-acid sequence, 336 residues long: Alcohol dehydrogenase, propanol-preferring (336 aa).

7 residues coordinate Zn(2+): Cys37, His58, Cys89, Cys92, Cys95, Cys103, and Cys145.

The protein belongs to the zinc-containing alcohol dehydrogenase family. It depends on Zn(2+) as a cofactor.

The catalysed reaction is a primary alcohol + NAD(+) = an aldehyde + NADH + H(+). The enzyme catalyses a secondary alcohol + NAD(+) = a ketone + NADH + H(+). Functionally, preferred specificity is towards 1-propanol. The chain is Alcohol dehydrogenase, propanol-preferring (adhP) from Escherichia coli (strain K12).